Here is a 196-residue protein sequence, read N- to C-terminus: ATP-dependent Clp protease proteolytic subunit (196 aa).

S96 acts as the Nucleophile in catalysis. H121 is an active-site residue.

It belongs to the peptidase S14 family. In terms of assembly, fourteen ClpP subunits assemble into 2 heptameric rings which stack back to back to give a disk-like structure with a central cavity, resembling the structure of eukaryotic proteasomes.

Its subcellular location is the cytoplasm. The catalysed reaction is Hydrolysis of proteins to small peptides in the presence of ATP and magnesium. alpha-casein is the usual test substrate. In the absence of ATP, only oligopeptides shorter than five residues are hydrolyzed (such as succinyl-Leu-Tyr-|-NHMec, and Leu-Tyr-Leu-|-Tyr-Trp, in which cleavage of the -Tyr-|-Leu- and -Tyr-|-Trp bonds also occurs).. In terms of biological role, cleaves peptides in various proteins in a process that requires ATP hydrolysis. Has a chymotrypsin-like activity. Plays a major role in the degradation of misfolded proteins. This chain is ATP-dependent Clp protease proteolytic subunit, found in Streptococcus uberis (strain ATCC BAA-854 / 0140J).